The primary structure comprises 640 residues: Probable potassium transport system protein Kup 2 (640 aa).

12 helical membrane-spanning segments follow: residues 19-39, 67-87, 118-138, 155-175, 181-201, 230-250, 265-285, 307-327, 355-375, 384-404, 415-435, and 437-457; these read LFSS…YGDI, VLSL…VVFV, GVVA…GVIT, EAAK…LFLV, GVIG…IAAL, FVGV…EALY, WLGL…ALLL, MVCL…SGVF, VYIP…VLVF, AYGI…FFVI, AVPL…ANLF, and IFDG…SMIT.

Belongs to the HAK/KUP transporter (TC 2.A.72) family.

Its subcellular location is the cell inner membrane. It catalyses the reaction K(+)(in) + H(+)(in) = K(+)(out) + H(+)(out). Its function is as follows. Transport of potassium into the cell. Likely operates as a K(+):H(+) symporter. This Syntrophobacter fumaroxidans (strain DSM 10017 / MPOB) protein is Probable potassium transport system protein Kup 2.